We begin with the raw amino-acid sequence, 1963 residues long: Immunoglobulin A1 protease (1963 aa).

An N-terminal signal peptide occupies residues methionine 1 to alanine 36. A propeptide spanning residues serine 37–threonine 99 is cleaved from the precursor. The LPXTG sorting signal motif lies at leucine 96 to glycine 100. Pentaglycyl murein peptidoglycan amidated threonine is present on threonine 99. Helical transmembrane passes span glutamine 106–serine 125 and lysine 132–leucine 154. Topologically, residues glutamate 155–lysine 1963 are extracellular. The interval lysine 253–aspartate 305 is disordered. Over residues leucine 276–threonine 296 the composition is skewed to basic and acidic residues. The G5 domain occupies lysine 314–lysine 393. The disordered stretch occupies residues glutamate 402–glutamate 681. 3 repeat units span residues alanine 419–proline 435, glutamate 436–threonine 452, and glutamate 453–proline 469. The 3 X 17 AA approximate tandem repeats stretch occupies residues alanine 419–proline 469. The span at valine 485–glutamate 511 shows a compositional bias: basic and acidic residues. Composition is skewed to polar residues over residues asparagine 516–glutamate 529 and glutamate 538–glutamate 572. The span at asparagine 574 to glutamate 591 shows a compositional bias: basic and acidic residues. Polar residues-rich tracts occupy residues glutamate 618–proline 639 and glutamate 648–threonine 674. Residue histidine 1604 participates in Zn(2+) binding. The active site involves glutamate 1605. Zn(2+) is bound by residues histidine 1608 and glutamate 1628.

Belongs to the peptidase M26 family. Zn(2+) serves as cofactor. Post-translationally, the Gram-positive cell-wall anchor motif LPXTG is located in the N-terminal part, in contrast to such motifs in other known streptococcal and staphylococcal proteins. The protease could be cleaved by the sortase and anchored in the membrane via the two potential N-terminal transmembrane domains, whereas the propeptide located prior to the LPXTG motif would remain attached to the cell wall peptidoglycan by an amide bond.

It is found in the secreted. Its subcellular location is the cell wall. The protein localises to the membrane. It carries out the reaction Cleavage of Pro-|-Thr bond in the hinge region of the heavy chain of human IgA.. In terms of biological role, zinc metalloproteinase which cleaves human immunoglobulin A1 (IgA1) in the hinge region. This chain is Immunoglobulin A1 protease (iga), found in Streptococcus pneumoniae (strain ATCC BAA-255 / R6).